The primary structure comprises 427 residues: 3-phosphoshikimate 1-carboxyvinyltransferase (427 aa).

Lys20, Ser21, and Arg25 together coordinate 3-phosphoshikimate. Phosphoenolpyruvate is bound at residue Lys20. The phosphoenolpyruvate site is built by Gly92 and Arg120. Positions 166, 168, 312, and 339 each coordinate 3-phosphoshikimate. Gln168 serves as a coordination point for phosphoenolpyruvate. The Proton acceptor role is filled by Asp312. Phosphoenolpyruvate is bound by residues Arg343 and Arg385.

This sequence belongs to the EPSP synthase family. As to quaternary structure, monomer.

It is found in the cytoplasm. The catalysed reaction is 3-phosphoshikimate + phosphoenolpyruvate = 5-O-(1-carboxyvinyl)-3-phosphoshikimate + phosphate. It participates in metabolic intermediate biosynthesis; chorismate biosynthesis; chorismate from D-erythrose 4-phosphate and phosphoenolpyruvate: step 6/7. Functionally, catalyzes the transfer of the enolpyruvyl moiety of phosphoenolpyruvate (PEP) to the 5-hydroxyl of shikimate-3-phosphate (S3P) to produce enolpyruvyl shikimate-3-phosphate and inorganic phosphate. The sequence is that of 3-phosphoshikimate 1-carboxyvinyltransferase from Streptococcus thermophilus (strain ATCC BAA-250 / LMG 18311).